An 84-amino-acid polypeptide reads, in one-letter code: Small ribosomal subunit protein uS17 (84 aa).

This sequence belongs to the universal ribosomal protein uS17 family. Part of the 30S ribosomal subunit.

Functionally, one of the primary rRNA binding proteins, it binds specifically to the 5'-end of 16S ribosomal RNA. The polypeptide is Small ribosomal subunit protein uS17 (Blochmanniella pennsylvanica (strain BPEN)).